The following is a 362-amino-acid chain: MDRPAREHLKFSKANTKNEIREMRIYKDDTADGLCFSEINVGCTSTTPKMSLSDYFSSVSCSFDGEMRIPDIPLKMYGDLHFHEQFTNDVDLDLLCWQLLSSNQDSRALCVNILRMVTSLSLGNAFISEGRYHYAIDTTEQTSAEDSDALRFLARIAKIVIKNDVDKSDVVAAQQTLIYYYFGNSYQGIHLNWDSKSSQQSIHGYSTSEVCLDHYIRMKVDLFHGLRSKNLVYGGNYQLVYQALFYYYVITNGRFSSGFNVRKDSIKSYFVPNDDPSMCNVSPRKPSLSLMFIRAVLITILIKDYSPVKEIPKYLRQLEVENPLTNSCLITDNGLRSEVPMNAAAPSAPTPTELPVFSPPSS.

The interval 341–362 (MNAAAPSAPTPTELPVFSPPSS) is disordered.

The chain is Probable non-structural 41.0 kDa protein (S6) from Maize rough dwarf virus (MRDV).